The sequence spans 424 residues: Myb family transcription factor RLI1 (424 aa).

The disordered stretch occupies residues 144 to 165 (RPQKRDSGERTPLPPPSQQQHQ). The 61-residue stretch at 238–298 (APSKTRIRWT…HLQKYRIAKY (61 aa)) folds into the HTH myb-type domain. A DNA-binding region (H-T-H motif) is located at residues 269 to 294 (PKGILKLMNSDGLTIYHIKSHLQKYR). Positions 326 to 391 (MQITEALRVQ…ELDDVVAFAA (66 aa)) form a coiled coil. The LHEQLE motif lies at 342–347 (LHEQLE).

The protein belongs to the MYB-CC family. Interacts with SPX1 and SPX2 in the nucleus; these interactions prevent binding to the promoters of target genes, thus regulating negatively leaf inclination in response to phosphate (Pi) starvation. As to quaternary structure, homodimer. Interacts with PHR2 in the nucleus. As to expression, mostly expressed in roots and leaves blades and, to a lower extent, in leaves sheaths, culms and panicles. Localized in leaves lamina joints. In terms of tissue distribution, expressed equally in shoots and roots. Mostly expressed in shoots and, to a lower extent, in roots.

The protein localises to the nucleus. Its function is as follows. Transcription factor binding to specific DNA sequences of target genes promoters, such as the motif R1BS 5'-NAKATNCN-3' and the motif P1BS 5'-GNATATNC-3' to trigger their expression. Nitrate-induced component involved in modulating phosphate (Pi) response and homeostasis together with PHR2; activates directly the expression of Pi starvation-induced (PSI) genes upon nitrate disponibility, thus triggering the nitrate-induced phosphate response (NIPR) promoting Pi uptake activity. Binds preferentially to the P1BS motif 5'-GNATATNC-3' in target genes promoters. In terms of biological role, binds preferentially to the R1BS motif 5'-NAKATNCN-3' in target genes promoters, including several genes involved in the plant hormone signal transduction pathway. Involved in the shoot architecture; positively regulates leaf inclination by affecting lamina joint cell elongation via the direct promotion of ILI4/BU1 and BC1 genes expression, especially in response to phosphate (Pi) availability. Regulates both brassinolide (BL) biosynthesis and signaling by directly activating BL-biosynthesis and signaling genes. This chain is Myb family transcription factor RLI1, found in Oryza sativa subsp. japonica (Rice).